The following is a 516-amino-acid chain: Leucine-rich repeat transmembrane neuronal protein 2 (516 aa).

The signal sequence occupies residues methionine 1–alanine 33. Positions cysteine 34–lysine 61 constitute an LRRNT domain. The Extracellular segment spans residues cysteine 34 to arginine 422. N-linked (GlcNAc...) asparagine glycosylation is present at asparagine 57. LRR repeat units lie at residues serine 63–serine 83, glutamine 86–glycine 107, lysine 110–glutamine 131, asparagine 134–glycine 155, lysine 158–aspartate 179, serine 182–glycine 203, lysine 206–arginine 227, serine 230–threonine 251, threonine 254–threonine 275, and asparagine 278–serine 299. N-linked (GlcNAc...) asparagine glycosylation occurs at asparagine 126. An N-linked (GlcNAc...) asparagine glycan is attached at asparagine 243. Residues asparagine 311–asparagine 362 enclose the LRRCT domain. A glycan (N-linked (GlcNAc...) asparagine) is linked at asparagine 362. Residues valine 423–isoleucine 443 form a helical membrane-spanning segment. The Cytoplasmic portion of the chain corresponds to serine 444 to valine 516. The short motif at glutamate 513 to valine 516 is the Involved in DLG4-binding element.

Belongs to the LRRTM family. As to quaternary structure, interacts with DLG4. Interacts with neurexin NRXN1; interaction is mediated by heparan sulfate glycan modification on neurexin. Expressed in neuronal tissues.

It localises to the cell membrane. The protein resides in the postsynaptic cell membrane. Its function is as follows. Involved in the development and maintenance of excitatory synapses in the vertebrate nervous system. Regulates surface expression of AMPA receptors and instructs the development of functional glutamate release sites. Acts as a ligand for the presynaptic receptors NRXN1-A and NRXN1-B. In Homo sapiens (Human), this protein is Leucine-rich repeat transmembrane neuronal protein 2 (LRRTM2).